The chain runs to 153 residues: 6,7-dimethyl-8-ribityllumazine synthase (153 aa).

5-amino-6-(D-ribitylamino)uracil is bound by residues Phe22, 56 to 58 (AFE), and 80 to 82 (AVI). (2S)-2-hydroxy-3-oxobutyl phosphate is bound at residue 85–86 (ST). His88 (proton donor) is an active-site residue. Phe113 is a 5-amino-6-(D-ribitylamino)uracil binding site. Arg127 is a (2S)-2-hydroxy-3-oxobutyl phosphate binding site.

This sequence belongs to the DMRL synthase family.

The catalysed reaction is (2S)-2-hydroxy-3-oxobutyl phosphate + 5-amino-6-(D-ribitylamino)uracil = 6,7-dimethyl-8-(1-D-ribityl)lumazine + phosphate + 2 H2O + H(+). Its pathway is cofactor biosynthesis; riboflavin biosynthesis; riboflavin from 2-hydroxy-3-oxobutyl phosphate and 5-amino-6-(D-ribitylamino)uracil: step 1/2. Its function is as follows. Catalyzes the formation of 6,7-dimethyl-8-ribityllumazine by condensation of 5-amino-6-(D-ribitylamino)uracil with 3,4-dihydroxy-2-butanone 4-phosphate. This is the penultimate step in the biosynthesis of riboflavin. The protein is 6,7-dimethyl-8-ribityllumazine synthase of Fusobacterium nucleatum subsp. nucleatum (strain ATCC 25586 / DSM 15643 / BCRC 10681 / CIP 101130 / JCM 8532 / KCTC 2640 / LMG 13131 / VPI 4355).